The sequence spans 476 residues: Lactate utilization protein B (476 aa).

4Fe-4S ferredoxin-type domains follow at residues 304–334 (GTEF…GHSY) and 353–382 (YDEY…LHEL). Positions 313, 316, 319, 323, 366, 369, and 373 each coordinate [4Fe-4S] cluster.

This sequence belongs to the LutB/YkgF family.

Functionally, is involved in L-lactate degradation and allows cells to grow with lactate as the sole carbon source. Has probably a role as an electron transporter during oxidation of L-lactate. The polypeptide is Lactate utilization protein B (Bacillus velezensis (strain DSM 23117 / BGSC 10A6 / LMG 26770 / FZB42) (Bacillus amyloliquefaciens subsp. plantarum)).